The chain runs to 587 residues: Bifunctional lycopene cyclase/phytoene synthase (587 aa).

The interval 1–236 (MGLDYILVHV…IVFGLVCIDY (236 aa)) is lycopene beta-cyclase. The next 7 membrane-spanning stretches (helical) occupy residues 5 to 25 (YILV…LVYW), 35 to 55 (KIST…SYLV), 65 to 85 (NGVI…FFII), 91 to 111 (SLVY…GTVA), 116 to 136 (LIGA…LCFG), 145 to 165 (IITW…GFII), and 218 to 238 (LFFL…DYAI). The phytoene synthase stretch occupies residues 243-587 (CELVQSPQAV…VAYRAMAWRK (345 aa)).

It in the N-terminal section; belongs to the lycopene beta-cyclase family. The protein in the C-terminal section; belongs to the phytoene/squalene synthase family.

It localises to the membrane. It carries out the reaction all-trans-lycopene = gamma-carotene. The enzyme catalyses gamma-carotene = all-trans-beta-carotene. The catalysed reaction is 2 (2E,6E,10E)-geranylgeranyl diphosphate = 15-cis-phytoene + 2 diphosphate. The protein operates within carotenoid biosynthesis; beta-carotene biosynthesis. Its pathway is carotenoid biosynthesis; phytoene biosynthesis; all-trans-phytoene from geranylgeranyl diphosphate: step 1/1. Functionally, bifunctional enzyme that catalyzes the reactions from geranylgeranyl diphosphate to phytoene (phytoene synthase) and lycopene to beta-carotene via the intermediate gamma-carotene (lycopene cyclase). The chain is Bifunctional lycopene cyclase/phytoene synthase from Aspergillus oryzae (strain ATCC 42149 / RIB 40) (Yellow koji mold).